A 152-amino-acid polypeptide reads, in one-letter code: Deoxyuridine 5'-triphosphate nucleotidohydrolase (152 aa).

Residues 71–73 (RSG), asparagine 84, and 88–90 (TVD) each bind substrate.

The protein belongs to the dUTPase family. The cofactor is Mg(2+).

The catalysed reaction is dUTP + H2O = dUMP + diphosphate + H(+). It participates in pyrimidine metabolism; dUMP biosynthesis; dUMP from dCTP (dUTP route): step 2/2. Its function is as follows. This enzyme is involved in nucleotide metabolism: it produces dUMP, the immediate precursor of thymidine nucleotides and it decreases the intracellular concentration of dUTP so that uracil cannot be incorporated into DNA. This is Deoxyuridine 5'-triphosphate nucleotidohydrolase from Maricaulis maris (strain MCS10) (Caulobacter maris).